Reading from the N-terminus, the 404-residue chain is MDNPFARFAGTRTIQANLSLLEENYVPDSFPHRENQINEMVTILSSIMRGSRPSNIIVYGKTGTGKTSTTKYVTKMLVEAASNVSVVYVNCEIYDSPYSILVAIANSAGEEKIPELGWPIDRIYRETVERVEKTGKFFIIILDEMDRLIKKNGGDSLYVLLKLMTDVDSVRVSMIGITNDTTVLENIDARIKSRLNQESIVFPPYNASEIRDIISSRLDKVLGPGVVDDTAINLCAAIGAQEHGDARKAIDLMRIAIEIAIRENRNKITENEIYEARERYEMNVLREAISTLPLHSKIVLLSAVVTQEIEPNSVITGEIYENYRRICDDLGFSPLSPRRISDLLTELADYGLLVMDDRNMGKYGRTRSFSVVHQAETIKKYLLEDENLSMFKSSKMPKQTRFDT.

Residues 64-68, Y205, and R217 contribute to the ATP site; that span reads TGKTS.

This sequence belongs to the CDC6/cdc18 family. As to quaternary structure, interacts with MCM.

In terms of biological role, involved in regulation of DNA replication. Stimulates the helicase activity of MCM via stimulation of its ATPase activity. Binding to MCM may result in conformational changes in MCM, leading to catalytic ATP hydrolysis by the helicase. Directly stimulates MCM movement along single-stranded and double-stranded DNA. Does not bind DNA. This chain is ORC1-type DNA replication protein 2 (cdc6-2), found in Thermoplasma acidophilum (strain ATCC 25905 / DSM 1728 / JCM 9062 / NBRC 15155 / AMRC-C165).